Consider the following 297-residue polypeptide: Tyrosine recombinase XerD (297 aa).

In terms of domain architecture, Core-binding (CB) spans 1–87; sequence MLEYAIEDFF…SIRSFHQFLI (87 aa). The region spanning 108-291 is the Tyr recombinase domain; the sequence is KLPDILSQDE…TKARLKDMYQ (184 aa). Residues Arg-147, Lys-171, His-243, Arg-246, and His-269 contribute to the active site. Catalysis depends on Tyr-278, which acts as the O-(3'-phospho-DNA)-tyrosine intermediate.

Belongs to the 'phage' integrase family. XerD subfamily. In terms of assembly, forms a cyclic heterotetrameric complex composed of two molecules of XerC and two molecules of XerD.

The protein localises to the cytoplasm. Its function is as follows. Site-specific tyrosine recombinase, which acts by catalyzing the cutting and rejoining of the recombining DNA molecules. The XerC-XerD complex is essential to convert dimers of the bacterial chromosome into monomers to permit their segregation at cell division. It also contributes to the segregational stability of plasmids. This is Tyrosine recombinase XerD from Oceanobacillus iheyensis (strain DSM 14371 / CIP 107618 / JCM 11309 / KCTC 3954 / HTE831).